A 148-amino-acid polypeptide reads, in one-letter code: 3-hydroxyacyl-[acyl-carrier-protein] dehydratase FabZ (148 aa).

His-55 is a catalytic residue.

Belongs to the thioester dehydratase family. FabZ subfamily.

The protein localises to the cytoplasm. The enzyme catalyses a (3R)-hydroxyacyl-[ACP] = a (2E)-enoyl-[ACP] + H2O. Its function is as follows. Involved in unsaturated fatty acids biosynthesis. Catalyzes the dehydration of short chain beta-hydroxyacyl-ACPs and long chain saturated and unsaturated beta-hydroxyacyl-ACPs. The polypeptide is 3-hydroxyacyl-[acyl-carrier-protein] dehydratase FabZ (Haemophilus influenzae (strain PittEE)).